Here is a 372-residue protein sequence, read N- to C-terminus: N-methyl-L-tryptophan oxidase (372 aa).

4 to 34 contributes to the FAD binding site; the sequence is DLIIIGSGSVGAAAGYYATRAGLNVLMTDAH. Cys308 carries the S-8alpha-FAD cysteine modification.

This sequence belongs to the MSOX/MTOX family. MTOX subfamily. Monomer. FAD is required as a cofactor.

It catalyses the reaction N(alpha)-methyl-L-tryptophan + O2 + H2O = L-tryptophan + formaldehyde + H2O2. Catalyzes the oxidative demethylation of N-methyl-L-tryptophan. The sequence is that of N-methyl-L-tryptophan oxidase from Escherichia coli O139:H28 (strain E24377A / ETEC).